A 155-amino-acid chain; its full sequence is Endoribonuclease YbeY (155 aa).

The Zn(2+) site is built by His120, His124, and His130.

Belongs to the endoribonuclease YbeY family. Zn(2+) is required as a cofactor.

The protein resides in the cytoplasm. Its function is as follows. Single strand-specific metallo-endoribonuclease involved in late-stage 70S ribosome quality control and in maturation of the 3' terminus of the 16S rRNA. The sequence is that of Endoribonuclease YbeY from Alkaliphilus metalliredigens (strain QYMF).